A 429-amino-acid chain; its full sequence is 3-phosphoshikimate 1-carboxyvinyltransferase (429 aa).

The 3-phosphoshikimate site is built by Lys20, Ser21, and Arg25. Phosphoenolpyruvate is bound at residue Lys20. Gly89 and Arg118 together coordinate phosphoenolpyruvate. Positions 164, 165, 166, 192, 311, and 338 each coordinate 3-phosphoshikimate. Gln166 lines the phosphoenolpyruvate pocket. Asp311 serves as the catalytic Proton acceptor. Phosphoenolpyruvate is bound by residues Arg342 and Arg384.

Belongs to the EPSP synthase family. As to quaternary structure, monomer.

It is found in the cytoplasm. It carries out the reaction 3-phosphoshikimate + phosphoenolpyruvate = 5-O-(1-carboxyvinyl)-3-phosphoshikimate + phosphate. The protein operates within metabolic intermediate biosynthesis; chorismate biosynthesis. In terms of biological role, catalyzes the transfer of the enolpyruvyl moiety of phosphoenolpyruvate (PEP) to the 5-hydroxyl of shikimate-3-phosphate (S3P) to produce enolpyruvyl shikimate-3-phosphate and inorganic phosphate. The chain is 3-phosphoshikimate 1-carboxyvinyltransferase from Methanococcus maripaludis (strain C6 / ATCC BAA-1332).